A 224-amino-acid polypeptide reads, in one-letter code: 7-cyano-7-deazaguanine synthase (224 aa).

12 to 22 (LSGGLDSSTVT) is an ATP binding site. The Zn(2+) site is built by Cys-193, Cys-201, Cys-204, and Cys-207.

The protein belongs to the QueC family. Zn(2+) serves as cofactor.

It carries out the reaction 7-carboxy-7-deazaguanine + NH4(+) + ATP = 7-cyano-7-deazaguanine + ADP + phosphate + H2O + H(+). The protein operates within purine metabolism; 7-cyano-7-deazaguanine biosynthesis. Functionally, catalyzes the ATP-dependent conversion of 7-carboxy-7-deazaguanine (CDG) to 7-cyano-7-deazaguanine (preQ(0)). This is 7-cyano-7-deazaguanine synthase from Prochlorococcus marinus (strain MIT 9215).